The following is a 416-amino-acid chain: Probable protein phosphatase 2C 49 (416 aa).

The PPM-type phosphatase domain maps to 91–411 (RYGVTSVFGR…DNVSVVVVDL (321 aa)). Mn(2+) contacts are provided by D131, G132, and D319. Residues 343-360 (PPSPPGCSRPKAVLPPPA) are compositionally biased toward pro residues. Positions 343-368 (PPSPPGCSRPKAVLPPPAGASGGGGG) are disordered. D402 is a Mn(2+) binding site.

Belongs to the PP2C family. Requires Mg(2+) as cofactor. It depends on Mn(2+) as a cofactor.

It catalyses the reaction O-phospho-L-seryl-[protein] + H2O = L-seryl-[protein] + phosphate. The catalysed reaction is O-phospho-L-threonyl-[protein] + H2O = L-threonyl-[protein] + phosphate. The sequence is that of Probable protein phosphatase 2C 49 from Oryza sativa subsp. japonica (Rice).